Consider the following 239-residue polypeptide: Ribonuclease PH (239 aa).

Phosphate is bound by residues arginine 87 and 125-127; that span reads GTR.

The protein belongs to the RNase PH family. In terms of assembly, homohexameric ring arranged as a trimer of dimers.

The catalysed reaction is tRNA(n+1) + phosphate = tRNA(n) + a ribonucleoside 5'-diphosphate. Phosphorolytic 3'-5' exoribonuclease that plays an important role in tRNA 3'-end maturation. Removes nucleotide residues following the 3'-CCA terminus of tRNAs; can also add nucleotides to the ends of RNA molecules by using nucleoside diphosphates as substrates, but this may not be physiologically important. Probably plays a role in initiation of 16S rRNA degradation (leading to ribosome degradation) during starvation. In Cellvibrio japonicus (strain Ueda107) (Pseudomonas fluorescens subsp. cellulosa), this protein is Ribonuclease PH.